The primary structure comprises 272 residues: Tryptophan synthase alpha chain (272 aa).

Residues Glu-60 and Asp-71 each act as proton acceptor in the active site.

It belongs to the TrpA family. As to quaternary structure, tetramer of two alpha and two beta chains.

The catalysed reaction is (1S,2R)-1-C-(indol-3-yl)glycerol 3-phosphate + L-serine = D-glyceraldehyde 3-phosphate + L-tryptophan + H2O. It functions in the pathway amino-acid biosynthesis; L-tryptophan biosynthesis; L-tryptophan from chorismate: step 5/5. The alpha subunit is responsible for the aldol cleavage of indoleglycerol phosphate to indole and glyceraldehyde 3-phosphate. The chain is Tryptophan synthase alpha chain from Methanosarcina acetivorans (strain ATCC 35395 / DSM 2834 / JCM 12185 / C2A).